The chain runs to 2003 residues: Histone acetyltransferase KAT6A (2003 aa).

In terms of domain architecture, SAMD1-like winged helix (WH) spans 1–77; the sequence is MVKLANPLYT…LNSYKDPDNP (77 aa). The required for activation of RUNX1-1 stretch occupies residues 1 to 144; it reads MVKLANPLYT…CGGSAAPGFH (144 aa). Residues 52-166 are required for nuclear localization; it reads ELSVKDGTIL…HGRLLKDGPL (115 aa). The H15 domain occupies 95–171; that stretch reads QSVDWNKLLK…KDGPLYRLNT (77 aa). Residues 144 to 663 are interaction with PML; the sequence is HQQLRLAIKR…RKGYGRFLID (520 aa). Lys172 is modified (N6-acetyllysine). 2 consecutive PHD-type zinc fingers follow at residues 206–265 and 262–313; these read IPIC…CKTC and CKTC…CRPR. The interaction with RUNX1-1 stretch occupies residues 312–663; sequence PRKKGRKLLQ…RKGYGRFLID (352 aa). A disordered region spans residues 336–377; sequence GRPKNRLKKQNTVSKGPFSKVRTGPGRGRKRKITVSSQSASS. Residues Lys350 and Lys355 each carry the N6-acetyllysine modification. Thr369 carries the post-translational modification Phosphothreonine; by PKB/AKT1. Residue Ser419 is modified to Phosphoserine. The segment at 439–466 is disordered; it reads RKKGNRKSSTSDWPTDNQDGWESKQENE. The span at 445 to 458 shows a compositional bias: polar residues; it reads KSSTSDWPTDNQDG. The residue at position 472 (Ser472) is a Phosphoserine. The interval 487 to 777 is catalytic; the sequence is IQEQALQKVG…VDPECLRWTP (291 aa). The MYST-type HAT domain occupies 503-777; that stretch reads PQVRCPSVIE…VDPECLRWTP (275 aa). Residues 506–809 are mediates interaction with BRPF1, required for histone H3 acetyltransferase activity; the sequence is RCPSVIEFGK…EPQGQERELE (304 aa). A C2HC MYST-type zinc finger spans residues 536-561; that stretch reads LYLCEFCLKYMKSRTILQQHMKKCGW. Position 603 is an N6-acetyllysine; by autocatalysis (Lys603). Residues 644–648 and 653–659 each bind acetyl-CoA; these read SCIMI and QRKGYGR. The active-site Proton donor/acceptor is Glu679. Ser683 contacts acetyl-CoA. The disordered stretch occupies residues 784 to 939; that stretch reads VVSEDEDEEA…DGKPDIPKGR (156 aa). At Ser786 the chain carries Phosphoserine. Residues 786–798 show a composition bias toward acidic residues; that stretch reads SEDEDEEADEGEK. The segment covering 799–841 has biased composition (basic and acidic residues); the sequence is EEPQGQERELETRVKVGKSVSREKKDQESSSLIETDKKPEVKE. An N6-acetyllysine mark is found at Lys813 and Lys816. A Glycyl lysine isopeptide (Lys-Gly) (interchain with G-Cter in SUMO2) cross-link involves residue Lys836. Positions 866–875 are enriched in basic residues; the sequence is RRGRCGRKNR. Positions 876 to 890 are enriched in basic and acidic residues; it reads KTQERFGDKDSKMLV. At Tyr901 the chain carries Phosphotyrosine. Positions 904–917 are enriched in basic and acidic residues; that stretch reads CEEKSETSQERFTE. Phosphoserine is present on residues Ser941 and Ser954. A disordered region spans residues 983–1083; sequence GFSESSEEEE…EEEESELFPR (101 aa). Position 1007 is an N6-acetyllysine (Lys1007). Residues 1009–1030 are compositionally biased toward basic residues; the sequence is TLKRKKPILHRRRRVRKRKHHN. Low complexity predominate over residues 1031 to 1042; it reads SSVVTETISETT. 2 stretches are compositionally biased toward acidic residues: residues 1043-1053 and 1065-1079; these read EVLDEPFEDSD and FEMEEEEEEEEEESE. Residues Ser1090, Ser1091, and Ser1115 each carry the phosphoserine modification. 5 disordered regions span residues 1096 to 1174, 1197 to 1438, 1455 to 1533, 1546 to 1568, and 1631 to 1707; these read RCQS…RKPG, IKPG…GAYQ, HTDE…PSVS, DLGSIESTTENYENPSSYDSTMG, and TCVV…CSMN. The span at 1107–1120 shows a compositional bias: acidic residues; that stretch reads EEEEEEEESDDADD. The span at 1136–1147 shows a compositional bias: polar residues; it reads NSASLEPDTSTP. The segment covering 1148 to 1174 has biased composition (basic residues); the sequence is MKKKKGWPKGKSRKPIHWKKRPGRKPG. Basic and acidic residues predominate over residues 1204–1229; sequence RTQENEEIVEVKEDLLEERKEEMHTE. Acidic residues-rich tracts occupy residues 1230–1241 and 1282–1299; these read PDEEAEEEEDTT and EEPQELEEQEQEEEDEVT. The span at 1317–1334 shows a compositional bias: basic and acidic residues; sequence HLDSLKTKEPEEQPARED. Lys1336 participates in a covalent cross-link: Glycyl lysine isopeptide (Lys-Gly) (interchain with G-Cter in SUMO2). Basic and acidic residues-rich tracts occupy residues 1352–1361 and 1393–1414; these read DSRENTKDKD and DSNTKEELIELKEEEEIPHSEL. The segment covering 1473-1490 has biased composition (low complexity); the sequence is HNSPISSIPSHPSQSVRS. 2 stretches are compositionally biased toward polar residues: residues 1502–1523 and 1550–1568; these read GYTQISPEQGSLSAPSMQNMET and IESTTENYENPSSYDSTMG. Residues 1511-1636 are interaction with RUNX1-2; that stretch reads GSLSAPSMQN…KSPQTCVVER (126 aa). The tract at residues 1511–1740 is interaction with PML; it reads GSLSAPSMQN…YERIPGDFGA (230 aa). Pro residues-rich tracts occupy residues 1640 to 1673 and 1682 to 1698; these read NQQPPPPPPPPPPPQQPQPPPQQQAAPQPPPPQP and QPPPPQQQPQPPPPQQQ. The interval 1912 to 1947 is required for activation of RUNX1-2; that stretch reads SMNMNTLNAMNSYRMTQPMMNSSYHSNPAYMNQTAQ.

The protein belongs to the MYST (SAS/MOZ) family. In terms of assembly, component of the MOZ/MORF complex composed at least of ING5, KAT6A, KAT6B, MEAF6 and one of BRPF1, BRD1/BRPF2 and BRPF3. Interacts with RUNX2. Interacts with RUNX1; phosphorylation of RUNX1 enhances the interaction. Interacts with p53/TP53. Interacts with PML and this interaction positively regulates its acetylation activity towards p53/TP53. Autoacetylated. Autoacetylation at Lys-603 is required for proper function. In terms of processing, phosphorylation at Thr-369 by PKB/AKT1 inhibits its interaction with PML and negatively regulates its acetylation activity towards p53/TP53.

The protein localises to the nucleus. The protein resides in the nucleolus. Its subcellular location is the nucleoplasm. It localises to the PML body. It carries out the reaction L-lysyl-[protein] + acetyl-CoA = N(6)-acetyl-L-lysyl-[protein] + CoA + H(+). Histone acetyltransferase that acetylates lysine residues in histone H3 and histone H4 (in vitro). Component of the MOZ/MORF complex which has a histone H3 acetyltransferase activity. May act as a transcriptional coactivator for RUNX1 and RUNX2. Acetylates p53/TP53 at 'Lys-120' and 'Lys-382' and controls its transcriptional activity via association with PML. This Mus musculus (Mouse) protein is Histone acetyltransferase KAT6A (Kat6a).